Consider the following 213-residue polypeptide: Adenylate kinase (213 aa).

10–15 contacts ATP; sequence GCGKGT. The tract at residues 30–59 is NMP; that stretch reads STGDLMRKEISLNTTLGLKCQEYMNAGKYV. AMP contacts are provided by residues Thr-31, Arg-36, 57–59, 83–86, and Gln-90; these read KYV and GYPR. The interval 124–161 is LID; the sequence is NRLVCPLCKASFNLETRKPKQEGLCDFDNTKLVKRSDD. Arg-125 serves as a coordination point for ATP. Residues Cys-128 and Cys-131 each contribute to the Zn(2+) site. 134–135 is an ATP binding site; it reads SF. Positions 148 and 151 each coordinate Zn(2+). AMP-binding residues include Arg-158 and Arg-169. Residue Asn-197 coordinates ATP.

This sequence belongs to the adenylate kinase family. In terms of assembly, monomer.

The protein localises to the cytoplasm. It catalyses the reaction AMP + ATP = 2 ADP. The protein operates within purine metabolism; AMP biosynthesis via salvage pathway; AMP from ADP: step 1/1. In terms of biological role, catalyzes the reversible transfer of the terminal phosphate group between ATP and AMP. Plays an important role in cellular energy homeostasis and in adenine nucleotide metabolism. This is Adenylate kinase from Mycoplasma capricolum subsp. capricolum (strain California kid / ATCC 27343 / NCTC 10154).